The primary structure comprises 1441 residues: Remodeling and spacing factor 1 (1441 aa).

Residues 17–84 (PGSCPNFAVV…MRKIGKSVTA (68 aa)) form the DDT domain. Glycyl lysine isopeptide (Lys-Gly) (interchain with G-Cter in SUMO2) cross-links involve residues lysine 136 and lysine 215. Positions 215–227 (KNSSQQDNSSRES) are enriched in polar residues. Residues 215–283 (KNSSQQDNSS…TTVKKEKEDE (69 aa)) are disordered. Position 227 is a phosphoserine (serine 227). Composition is skewed to basic and acidic residues over residues 234–257 (ETKKEEETPKQEEQKESEKMKSEE) and 274–283 (TTVKKEKEDE). Residues lysine 236, lysine 243, lysine 248, lysine 252, and lysine 254 each participate in a glycyl lysine isopeptide (Lys-Gly) (interchain with G-Cter in SUMO2) cross-link. Residue lysine 277 forms a Glycyl lysine isopeptide (Lys-Gly) (interchain with G-Cter in SUMO1); alternate linkage. Lysine 277 participates in a covalent cross-link: Glycyl lysine isopeptide (Lys-Gly) (interchain with G-Cter in SUMO2); alternate. Residues lysine 284, lysine 288, lysine 294, lysine 305, lysine 306, lysine 309, lysine 323, lysine 327, lysine 337, lysine 342, lysine 358, lysine 373, lysine 381, and lysine 390 each participate in a glycyl lysine isopeptide (Lys-Gly) (interchain with G-Cter in SUMO2) cross-link. Basic and acidic residues predominate over residues 330 to 340 (RADPKDTKSSM). Residues 330–385 (RADPKDTKSSMEKPVAQEPERIEFGGNIKSSHEITEKSTEETEKLKNDQQAKIPLK) form a disordered region. Positions 359–378 (SSHEITEKSTEETEKLKNDQ) are enriched in basic and acidic residues. A phosphoserine mark is found at serine 392 and serine 397. Glycyl lysine isopeptide (Lys-Gly) (interchain with G-Cter in SUMO2) cross-links involve residues lysine 400, lysine 405, lysine 415, and lysine 419. The residue at position 429 (serine 429) is a Phosphoserine. Lysine 439 is covalently cross-linked (Glycyl lysine isopeptide (Lys-Gly) (interchain with G-Cter in SUMO2)). Residue lysine 456 forms a Glycyl lysine isopeptide (Lys-Gly) (interchain with G-Cter in SUMO1); alternate linkage. Lysine 456 is covalently cross-linked (Glycyl lysine isopeptide (Lys-Gly) (interchain with G-Cter in SUMO2); alternate). Glycyl lysine isopeptide (Lys-Gly) (interchain with G-Cter in SUMO2) cross-links involve residues lysine 463 and lysine 468. Basic and acidic residues predominate over residues 467 to 480 (TKEESYSPSKDRNI). The disordered stretch occupies residues 467–634 (TKEESYSPSK…AAETSPPSNI (168 aa)). At serine 473 the chain carries Phosphoserine. Residues 482 to 498 (TEGNGTESLNSVITSMK) show a composition bias toward polar residues. Residue lysine 498 forms a Glycyl lysine isopeptide (Lys-Gly) (interchain with G-Cter in SUMO2) linkage. Residues 500–514 (GELEKETAPLRKDAD) are compositionally biased toward basic and acidic residues. Residue serine 524 is modified to Phosphoserine. Residues 552–562 (SKTALSSTESC) are compositionally biased toward polar residues. Lysine 565 participates in a covalent cross-link: Glycyl lysine isopeptide (Lys-Gly) (interchain with G-Cter in SUMO2). The span at 565 to 601 (KGEEKSPKTKKDKRPPILECLEKLEKSKKTFLDKDAQ) shows a compositional bias: basic and acidic residues. A phosphoserine mark is found at serine 570 and serine 604. Over residues 609–621 (EVPKSTLESEKPG) the composition is skewed to basic and acidic residues. Serine 622 is subject to Phosphoserine. Threonine 628 carries the post-translational modification Phosphothreonine. The residue at position 629 (serine 629) is a Phosphoserine. Residues lysine 662, lysine 663, lysine 670, lysine 677, lysine 698, and lysine 709 each participate in a glycyl lysine isopeptide (Lys-Gly) (interchain with G-Cter in SUMO2) cross-link. Residues 675 to 887 (FTKVEMDNLD…EEKESEEAIL (213 aa)) are disordered. Residue serine 748 is modified to Phosphoserine. Basic and acidic residues-rich tracts occupy residues 753-770 (LEPENKQEKTEKEEEKTN), 789-802 (AEIRDQKADKKRGE), and 816-831 (KTDKKEILKKSEKDTN). Residues lysine 758, lysine 768, lysine 795, and lysine 799 each participate in a glycyl lysine isopeptide (Lys-Gly) (interchain with G-Cter in SUMO2) cross-link. Residues 864 to 873 (GSGSEKSSAA) show a composition bias toward low complexity. Over residues 874 to 887 (SEEEEEKESEEAIL) the composition is skewed to acidic residues. Phosphoserine is present on serine 882. Residues 891-941 (DEPCKKCGLPNHPELILLCDSCDSGYHTACLRPPLMIIPDGEWFCPPCQHK) form a PHD-type zinc finger. The stretch at 942–1012 (LLCEKLEEQL…SKANLLERRS (71 aa)) forms a coiled coil. A disordered region spans residues 983–1007 (PPQEPDFSEDQEEKKKDSKKSKANL). Residue lysine 1039 forms a Glycyl lysine isopeptide (Lys-Gly) (interchain with G-Cter in SUMO2) linkage. Lysine 1050 carries the post-translational modification N6-acetyllysine. Residues 1063-1428 (ISTILDEERK…EEEEDELLRV (366 aa)) are disordered. Acidic residues-rich tracts occupy residues 1094–1107 (LDSDSNLDEEESED) and 1120–1141 (VVSDENPDESEEDPPSNDDSDT). A phosphoserine mark is found at serine 1096, serine 1098, and serine 1105. Residues 1146-1169 (RRLRRHPSRPMRQSRRLRRKTPKK) are compositionally biased toward basic residues. A compositionally biased stretch (acidic residues) spans 1189–1199 (SDFSDDFSDDF). Residues 1203–1212 (RRRRSRRNQK) show a composition bias toward basic residues. Phosphoserine occurs at positions 1221, 1223, and 1226. A compositionally biased stretch (basic residues) spans 1229–1244 (SLRRGKEIRRVHKRRL). Phosphoserine is present on residues serine 1258 and serine 1277. A Phosphothreonine modification is found at threonine 1278. A compositionally biased stretch (acidic residues) spans 1280-1292 (EYSEADEEEEEEE). Threonine 1305 bears the Phosphothreonine mark. 2 positions are modified to phosphoserine: serine 1325 and serine 1336. Basic and acidic residues predominate over residues 1335–1344 (ESTKKPYRIE). The residue at position 1339 (lysine 1339) is an N6-acetyllysine. Serine 1345, serine 1359, and serine 1375 each carry phosphoserine. Over residues 1394–1408 (PKDNSTASASLASNG) the composition is skewed to polar residues.

Component of the RSF-1 ISWI chromatin-remodeling complex at least composed of SMARCA1 and RSF1. Within the RSF-1 ISWI chromatin-remodeling complex interacts with SMARCA1. Component of the RSF-5 ISWI chromatin-remodeling complex (also called the RSF complex) at least composed of SMARCA5/SNF2H and RSF1. Within the RSF-5 ISWI chromatin-remodeling complex interacts with SMARCA5/SNF2H; the interaction is direct. Identified in a centromere complex containing histones H2A, H2B and H4, and at least CENPA, CENPB, CENPC, CENPT, CENPN, HJURP, SUPT16H, SSRP1 and RSF1. Also binds the HBV pX/HBx protein, which is required to activate transcription of the viral genome. Post-translationally, phosphorylated. Ubiquitously expressed. Highly expressed in the heart, skeletal muscle, kidney and placenta. Expressed at low levels in the brain and colon.

The protein resides in the nucleus. Its function is as follows. Regulatory subunit of the ATP-dependent RSF-1 and RSF-5 ISWI chromatin-remodeling complexes, which form ordered nucleosome arrays on chromatin and facilitate access to DNA during DNA-templated processes such as DNA replication, transcription, and repair. Binds to core histones together with SMARCA5, and is required for the assembly of regular nucleosome arrays by the RSF-5 ISWI chromatin-remodeling complex. Directly stimulates the ATPase activity of SMARCA1 and SMARCA5 in the RSF-1 and RSF-5 ISWI chromatin-remodeling complexes, respectively. The RSF-1 ISWI chromatin remodeling complex has a lower ATP hydrolysis rate than the RSF-5 ISWI chromatin-remodeling complex. The complexes do not have the ability to slide mononucleosomes to the center of a DNA template. Facilitates transcription of hepatitis B virus (HBV) genes by the pX transcription activator. In case of infection by HBV, together with pX, it represses TNF-alpha induced NF-kappa-B transcription activation. Represses transcription when artificially recruited to chromatin by fusion to a heterogeneous DNA binding domain. The protein is Remodeling and spacing factor 1 (RSF1) of Homo sapiens (Human).